The primary structure comprises 515 residues: AAA ATPase forming ring-shaped complexes (515 aa).

Positions 2-49 (NDHDEETLASLQQANDQLMAKNHALVKALSRATQEMTKTKAQLNQLAG) form a coiled coil. Residue 240-245 (GNGKTL) participates in ATP binding.

The protein belongs to the AAA ATPase family. Homohexamer. Assembles into a hexameric ring structure.

The sequence is that of AAA ATPase forming ring-shaped complexes from Bifidobacterium adolescentis (strain ATCC 15703 / DSM 20083 / NCTC 11814 / E194a).